The sequence spans 260 residues: DNA repair protein RecO (260 aa).

This sequence belongs to the RecO family.

Involved in DNA repair and RecF pathway recombination. The protein is DNA repair protein RecO of Desulfosudis oleivorans (strain DSM 6200 / JCM 39069 / Hxd3) (Desulfococcus oleovorans).